A 518-amino-acid polypeptide reads, in one-letter code: DNA-binding protein D-ETS-4 (518 aa).

Disordered stretches follow at residues 74 to 113 (SQPI…QSSP) and 152 to 172 (LPPS…SCGE). Positions 84 to 94 (TAPYTNPSSHQ) are enriched in polar residues. The span at 102-113 (PHSAYPSPQSSP) shows a compositional bias: low complexity. Polar residues predominate over residues 158–171 (ESNCETPSPRSSCG). Residues 258–344 (HAKREADAIC…AQLEIWKMAY (87 aa)) form the PNT domain. The interval 393–426 (APLNGSTTSPPATNASNGGTATVKRPNGGRTGGG) is disordered. Over residues 396 to 412 (NGSTTSPPATNASNGGT) the composition is skewed to polar residues. Residues 430 to 513 (IHLWQFLKEL…RSQRLVYQFC (84 aa)) constitute a DNA-binding region (ETS).

It belongs to the ETS family. Transient high expression in pole cells during embryonic stages 8-11.

The protein resides in the nucleus. May have a role in germline development. This is DNA-binding protein D-ETS-4 (Ets98B) from Drosophila melanogaster (Fruit fly).